Consider the following 651-residue polypeptide: Protein EXECUTER 2, chloroplastic (651 aa).

A chloroplast-targeting transit peptide spans 1 to 69 (MATTQPCLIG…KAPSLSCLRN (69 aa)). A UVR domain is found at 103–138 (ESVVSLLKSQLEDAVEKEDFEEAVKLKQAISEATVD). The interval 330–359 (DATEELVGEGTEETNSSDDEEEVEEEENDS) is disordered.

It is found in the plastid. It localises to the chloroplast. In terms of biological role, together with EX1, enables higher plants to perceive singlet oxygen as a stress signal in plastid that activates a genetically determined nuclear stress response program which triggers a programmed cell death (PCD). This transfer of singlet oxygen-induced stress-related signals from the plastid to the nucleus that triggers genetically controlled PCD pathway is unique to photosynthetic eukaryotes and operates under mild stress conditions, impeding photosystem II (PSII) without causing photooxidative damage of the plant. The polypeptide is Protein EXECUTER 2, chloroplastic (Arabidopsis thaliana (Mouse-ear cress)).